The sequence spans 311 residues: tRNA dimethylallyltransferase (311 aa).

11–18 (GPTASGKS) contacts ATP. 13-18 (TASGKS) contacts substrate. Interaction with substrate tRNA stretches follow at residues 36–39 (DSMQ) and 160–164 (QRLIR).

It belongs to the IPP transferase family. As to quaternary structure, monomer. The cofactor is Mg(2+).

The catalysed reaction is adenosine(37) in tRNA + dimethylallyl diphosphate = N(6)-dimethylallyladenosine(37) in tRNA + diphosphate. Catalyzes the transfer of a dimethylallyl group onto the adenine at position 37 in tRNAs that read codons beginning with uridine, leading to the formation of N6-(dimethylallyl)adenosine (i(6)A). The chain is tRNA dimethylallyltransferase from Rickettsia typhi (strain ATCC VR-144 / Wilmington).